We begin with the raw amino-acid sequence, 180 residues long: Adenine phosphoribosyltransferase (180 aa).

Ser-2 bears the N-acetylserine mark. 2 positions are modified to phosphoserine: Ser-15 and Ser-30. The residue at position 60 (Tyr-60) is a Phosphotyrosine. Ser-66 bears the Phosphoserine mark. The residue at position 114 (Lys-114) is an N6-acetyllysine. At Thr-135 the chain carries Phosphothreonine.

This sequence belongs to the purine/pyrimidine phosphoribosyltransferase family. As to quaternary structure, homodimer.

The protein resides in the cytoplasm. The catalysed reaction is AMP + diphosphate = 5-phospho-alpha-D-ribose 1-diphosphate + adenine. It functions in the pathway purine metabolism; AMP biosynthesis via salvage pathway; AMP from adenine: step 1/1. Functionally, catalyzes a salvage reaction resulting in the formation of AMP, that is energically less costly than de novo synthesis. This is Adenine phosphoribosyltransferase from Mastomys natalensis (African soft-furred rat).